The sequence spans 209 residues: Homeobox protein ceh-2 (209 aa).

Basic and acidic residues predominate over residues 1 to 14 (MTLKFSVERLVDSE). 2 disordered regions span residues 1–46 (MTLK…KSGK) and 181–209 (HKRV…KSVS). Positions 15–24 (KESEEADVEE) are enriched in acidic residues. Residues 126 to 185 (NKRIRTAFSASQLIQLEKAFEGNHYVVGNERKQLAAKLSLTETQVKVWFQNRRTKHKRVR) constitute a DNA-binding region (homeobox).

The protein belongs to the EMX homeobox family. As to expression, in the anterior pharynx, expressed in the I3 interneuron, the NSM and M3 motor neuron pairs, the three m2 muscle cells and the three e2 epithelial cells (at protein level).

It localises to the nucleus. Its function is as follows. Required for activity of the M3 pharyngeal motor neuron. This is Homeobox protein ceh-2 from Caenorhabditis elegans.